Consider the following 364-residue polypeptide: Small ribosomal subunit biogenesis GTPase RsgA (364 aa).

The region spanning 101 to 264 (KGLVEKPGVP…VIDTPGLREL (164 aa)) is the CP-type G domain. Residues 154–157 (NKSD) and 206–214 (GSSGAGKST) contribute to the GTP site. Residues Cys-288, Cys-293, His-295, and Cys-301 each contribute to the Zn(2+) site. A disordered region spans residues 339–364 (QVAQKRKRKTIPRQGKRWRREHGDGQ). Basic residues predominate over residues 342 to 358 (QKRKRKTIPRQGKRWRR).

The protein belongs to the TRAFAC class YlqF/YawG GTPase family. RsgA subfamily. Monomer. Associates with 30S ribosomal subunit, binds 16S rRNA. It depends on Zn(2+) as a cofactor.

The protein localises to the cytoplasm. Functionally, one of several proteins that assist in the late maturation steps of the functional core of the 30S ribosomal subunit. Helps release RbfA from mature subunits. May play a role in the assembly of ribosomal proteins into the subunit. Circularly permuted GTPase that catalyzes slow GTP hydrolysis, GTPase activity is stimulated by the 30S ribosomal subunit. The chain is Small ribosomal subunit biogenesis GTPase RsgA from Syntrophotalea carbinolica (strain DSM 2380 / NBRC 103641 / GraBd1) (Pelobacter carbinolicus).